Here is a 431-residue protein sequence, read N- to C-terminus: Serine--tRNA ligase (431 aa).

An L-serine-binding site is contributed by 238–240; sequence TAE. ATP is bound at residue 269–271; the sequence is RSE. An L-serine-binding site is contributed by Glu292. 356 to 359 provides a ligand contact to ATP; that stretch reads EISS. L-serine is bound at residue Ser392.

The protein belongs to the class-II aminoacyl-tRNA synthetase family. Type-1 seryl-tRNA synthetase subfamily. As to quaternary structure, homodimer. The tRNA molecule binds across the dimer.

The protein resides in the cytoplasm. The catalysed reaction is tRNA(Ser) + L-serine + ATP = L-seryl-tRNA(Ser) + AMP + diphosphate + H(+). The enzyme catalyses tRNA(Sec) + L-serine + ATP = L-seryl-tRNA(Sec) + AMP + diphosphate + H(+). It participates in aminoacyl-tRNA biosynthesis; selenocysteinyl-tRNA(Sec) biosynthesis; L-seryl-tRNA(Sec) from L-serine and tRNA(Sec): step 1/1. Functionally, catalyzes the attachment of serine to tRNA(Ser). Is also able to aminoacylate tRNA(Sec) with serine, to form the misacylated tRNA L-seryl-tRNA(Sec), which will be further converted into selenocysteinyl-tRNA(Sec). This Pectobacterium atrosepticum (strain SCRI 1043 / ATCC BAA-672) (Erwinia carotovora subsp. atroseptica) protein is Serine--tRNA ligase.